We begin with the raw amino-acid sequence, 479 residues long: mRNA export factor ICP27 homolog (479 aa).

The span at Met-1–Ser-15 shows a compositional bias: low complexity. 2 disordered regions span residues Met-1 to Val-77 and Lys-91 to Trp-210. A compositionally biased stretch (acidic residues) spans Thr-35–Gly-44. Residues Asp-61–His-146 are nuclear export signal and interaction with host NXF1. The tract at residues Lys-127 to Arg-130 is nuclear localization signal. Basic and acidic residues predominate over residues Glu-132 to Gly-142. Residues Lys-143–Arg-145 form a nuclear localization signal region. The Zn(2+) site is built by Cys-354, His-445, Cys-449, and Cys-454. Residues Cys-354 to Cys-454 form a CHC2-type zinc finger.

The protein belongs to the HHV-1 ICP27 protein family. As to quaternary structure, interacts with host XPO1 and with the XPO1 export pathway components small GTPase RAN and nucleoporin NUP214. Interacts with host SPEN, OTT1 and OTT3. Interacts with host SRSF1, SRSF3, SRSF7 and SRPK1. Interacts with host DHX9; this interaction may have an inhibitory effect on virion production. Interacts (via N-terminus) with host NXF1; this interaction plays a role in mRNA export. Phosphorylated by cellular protein kinase CK2.

Its subcellular location is the host nucleus. It localises to the host cytoplasm. Functionally, promotes the nuclear export of a subset of early and late viral mRNAs by interacting with mRNAs and cellular export proteins. Additionally may prevent the establishment of cellular antiviral state, by acting as an alternative splicing factor for cellular RNAs such as STAT1, resulting in a STAT1 mRNA incapable of producing the STAT1alpha isoform. In Homo sapiens (Human), this protein is mRNA export factor ICP27 homolog.